Consider the following 221-residue polypeptide: UPF0758 protein YicR (221 aa).

The region spanning 99–221 (ALLSPEMTRE…YVSFAERGWI (123 aa)) is the MPN domain. Zn(2+) is bound by residues histidine 170, histidine 172, and aspartate 183. Positions 170-183 (HNHPSGCAEPSKAD) match the JAMM motif motif.

This sequence belongs to the UPF0758 family. YicR subfamily.

The polypeptide is UPF0758 protein YicR (Salmonella newport (strain SL254)).